An 859-amino-acid chain; its full sequence is Volume-regulated anion channel subunit LRRC8D (859 aa).

The Cytoplasmic segment spans residues 1 to 22; it reads MFTLAEVASLNDIQPTYRILKP. A helical transmembrane segment spans residues 23-48; it reads WWDVFMDYLAVVMLMVAIFAGTMQLT. The Extracellular segment spans residues 49 to 164; it reads KDQVVCLPVL…YHLALPWYSK (116 aa). The cysteines at positions 54 and 355 are disulfide-linked. The disordered stretch occupies residues 110–138; the sequence is IPLQATHPHAESTLPNQEAKKEKRDPTGR. A compositionally biased stretch (basic and acidic residues) spans 127 to 138; the sequence is EAKKEKRDPTGR. A helical transmembrane segment spans residues 165–183; it reads YFPYLALIHTIILMVSSNF. The Cytoplasmic segment spans residues 184-309; that stretch reads WFKYPKTCSK…EDSDLIYKLY (126 aa). Positions 222–252 are disordered; sequence SEENKQRITGAQTLPKHVSTSSDEGSPSAST. The segment covering 228-252 has biased composition (polar residues); that stretch reads RITGAQTLPKHVSTSSDEGSPSAST. Phosphoserine occurs at positions 242, 243, and 247. Residues 310 to 331 traverse the membrane as a helical segment; it reads VVQTLIKTAKFIFILCYTANFV. Over 332–361 the chain is Extracellular; sequence NAISFEHVCKPKVEHLTGYEVFECTHNMAY. Residues 362 to 387 form a helical membrane-spanning segment; the sequence is MLKKLLISYISIICVYGFICLYTLFW. The Cytoplasmic segment spans residues 388–859; the sequence is LFRIPLKEYS…DVNVPFANGI (472 aa). LRR repeat units lie at residues 515–535, 539–560, 562–583, 590–610, 613–633, 637–658, 660–681, 685–706, 708–729, 731–752, 754–775, 777–798, and 800–821; these read NLQE…AFSF, HLRC…VYLL, NLRE…IGLE, HLKI…ITDV, HLTK…NSLK, NVAE…IFSL, NLQE…ISFQ, RLTC…ITHV, NLES…VFSL, KLRC…IGLL, NLQH…LFKC, KLRT…ISQL, and QLTQ…LGQC.

The protein belongs to the LRRC8 family. In terms of assembly, heterohexamer; oligomerizes with other LRRC8 proteins (LRRC8A, LRRC8B, LRRC8C and/or LRRC8E) to form a heterohexamer. In vivo, the subunit composition may depend primarily on expression levels, and heterooligomeric channels containing various proportions of the different LRRC8 proteins may coexist. Expressed in pancreatic beta cells. Also expressed in glucagon-secreting pancreatic alpha cells.

The protein localises to the cell membrane. Its subcellular location is the endoplasmic reticulum membrane. The enzyme catalyses chloride(in) = chloride(out). It carries out the reaction iodide(out) = iodide(in). The catalysed reaction is taurine(out) = taurine(in). In terms of biological role, non-essential component of the volume-regulated anion channel (VRAC, also named VSOAC channel), an anion channel required to maintain a constant cell volume in response to extracellular or intracellular osmotic changes. The VRAC channel conducts iodide better than chloride and can also conduct organic osmolytes like taurine. Plays a redundant role in the efflux of amino acids, such as aspartate, in response to osmotic stress family member (LRRC8B, LRRC8C, LRRC8D or LRRC8E); channel characteristics depend on the precise subunit composition. Also acts as a regulator of glucose-sensing in pancreatic beta cells: VRAC currents, generated in response to hypotonicity- or glucose-induced beta cell swelling, depolarize cells, thereby causing electrical excitation, leading to increase glucose sensitivity and insulin secretion. VRAC channels containing LRRC8D inhibit transport of immunoreactive cyclic dinucleotide GMP-AMP (2'-3'-cGAMP), an immune messenger produced in response to DNA virus in the cytosol. This chain is Volume-regulated anion channel subunit LRRC8D, found in Mus musculus (Mouse).